We begin with the raw amino-acid sequence, 619 residues long: 1-deoxy-D-xylulose-5-phosphate synthase (619 aa).

Thiamine diphosphate-binding positions include histidine 80 and glycine 121–serine 123. Residue aspartate 152 coordinates Mg(2+). Thiamine diphosphate-binding positions include glycine 153–alanine 154, asparagine 181, tyrosine 288, and glutamate 370. Asparagine 181 contacts Mg(2+).

This sequence belongs to the transketolase family. DXPS subfamily. Homodimer. Mg(2+) serves as cofactor. Requires thiamine diphosphate as cofactor.

The catalysed reaction is D-glyceraldehyde 3-phosphate + pyruvate + H(+) = 1-deoxy-D-xylulose 5-phosphate + CO2. Its pathway is metabolic intermediate biosynthesis; 1-deoxy-D-xylulose 5-phosphate biosynthesis; 1-deoxy-D-xylulose 5-phosphate from D-glyceraldehyde 3-phosphate and pyruvate: step 1/1. In terms of biological role, catalyzes the acyloin condensation reaction between C atoms 2 and 3 of pyruvate and glyceraldehyde 3-phosphate to yield 1-deoxy-D-xylulose-5-phosphate (DXP). The sequence is that of 1-deoxy-D-xylulose-5-phosphate synthase from Yersinia pseudotuberculosis serotype O:3 (strain YPIII).